The sequence spans 238 residues: Ribosomal RNA large subunit methyltransferase E (238 aa).

S-adenosyl-L-methionine is bound by residues Gly76, Trp78, Asp99, Asp115, and Asp139. Lys179 (proton acceptor) is an active-site residue.

Belongs to the class I-like SAM-binding methyltransferase superfamily. RNA methyltransferase RlmE family.

It is found in the cytoplasm. The enzyme catalyses uridine(2552) in 23S rRNA + S-adenosyl-L-methionine = 2'-O-methyluridine(2552) in 23S rRNA + S-adenosyl-L-homocysteine + H(+). In terms of biological role, specifically methylates the uridine in position 2552 of 23S rRNA at the 2'-O position of the ribose in the fully assembled 50S ribosomal subunit. The polypeptide is Ribosomal RNA large subunit methyltransferase E (Rhodopseudomonas palustris (strain BisB18)).